A 293-amino-acid polypeptide reads, in one-letter code: 33 kDa chaperonin (293 aa).

2 cysteine pairs are disulfide-bonded: Cys-238–Cys-240 and Cys-271–Cys-274.

Belongs to the HSP33 family. In terms of processing, under oxidizing conditions two disulfide bonds are formed involving the reactive cysteines. Under reducing conditions zinc is bound to the reactive cysteines and the protein is inactive.

The protein resides in the cytoplasm. Functionally, redox regulated molecular chaperone. Protects both thermally unfolding and oxidatively damaged proteins from irreversible aggregation. Plays an important role in the bacterial defense system toward oxidative stress. The sequence is that of 33 kDa chaperonin from Staphylococcus epidermidis (strain ATCC 35984 / DSM 28319 / BCRC 17069 / CCUG 31568 / BM 3577 / RP62A).